Consider the following 746-residue polypeptide: Teichoic acid poly(glycerol phosphate) polymerase (746 aa).

CDP-glycerol contacts are provided by residues Trp473–Pro477, Arg540, Pro573–Thr574, Arg610–His612, Ser652–Ser653, and Asp657.

The protein belongs to the CDP-glycerol glycerophosphotransferase family.

The protein localises to the cell membrane. The enzyme catalyses 4-O-[(2R)-glycerylphospho]-N-acetyl-beta-D-mannosaminyl-(1-&gt;4)-N-acetyl-alpha-D-glucosaminyl di-trans,octa-cis-undecaprenyl diphosphate + n CDP-glycerol = 4-O-{[(2R)-1-glycerylphospho](n)-(2R)-1-glycerylphospho}-N-acetyl-beta-D-mannosaminyl-(1-&gt;4)-N-acetyl-alpha-D-glucosaminyl undecaprenyl diphosphate + n CMP + n H(+). It participates in cell wall biogenesis; poly(glycerol phosphate) teichoic acid biosynthesis. Its function is as follows. Responsible for the polymerization of the main chain of the major teichoic acid by sequential transfer of glycerol phosphate units from CDP-glycerol to the disaccharide linkage unit. Synthesizes polymers of approximately 35 glycerol phosphate units in length. The protein is Teichoic acid poly(glycerol phosphate) polymerase (tagF) of Bacillus subtilis (strain 168).